The sequence spans 143 residues: Transcriptional regulator MraZ (143 aa).

2 SpoVT-AbrB domains span residues 5–47 (TYTP…PREE) and 76–119 (TDEQ…DAQA).

The protein belongs to the MraZ family. As to quaternary structure, forms oligomers.

The protein resides in the cytoplasm. The protein localises to the nucleoid. In Rhodococcus opacus (strain B4), this protein is Transcriptional regulator MraZ.